We begin with the raw amino-acid sequence, 585 residues long: uncharacterized protein (585 aa).

6 helical membrane-spanning segments follow: residues 18-38, 55-75, 128-148, 150-170, 238-258, and 276-296; these read FMWS…YPII, AAWV…ATFF, FFLS…AISL, VMFY…PFLA, IWSA…VALL, and VAFF…GFVI. Residues 18–301 form the ABC transmembrane type-1 domain; that stretch reads FMWSLLAMLL…LGFVINMFSQ (284 aa). Positions 335 to 570 constitute an ABC transporter domain; that stretch reads VHFKNVSLAY…GGYYKKIYDL (236 aa). An ATP-binding site is contributed by 369–376; it reads GPTGSGKS.

It belongs to the ABC transporter superfamily.

It localises to the cell membrane. This is an uncharacterized protein from Bacillus subtilis (strain 168).